The sequence spans 463 residues: 23S rRNA (uracil(1939)-C(5))-methyltransferase RlmD (463 aa).

Residues 8-76 (RSKSATVYTF…KRFEEGELIE (69 aa)) form the TRAM domain. 4 residues coordinate [4Fe-4S] cluster: cysteine 90, cysteine 96, cysteine 99, and cysteine 178. Glutamine 288, phenylalanine 317, asparagine 322, glutamate 341, aspartate 368, and aspartate 389 together coordinate S-adenosyl-L-methionine. Cysteine 415 serves as the catalytic Nucleophile.

It belongs to the class I-like SAM-binding methyltransferase superfamily. RNA M5U methyltransferase family. RlmD subfamily.

It catalyses the reaction uridine(1939) in 23S rRNA + S-adenosyl-L-methionine = 5-methyluridine(1939) in 23S rRNA + S-adenosyl-L-homocysteine + H(+). Its function is as follows. Catalyzes the formation of 5-methyl-uridine at position 1939 (m5U1939) in 23S rRNA. The protein is 23S rRNA (uracil(1939)-C(5))-methyltransferase RlmD of Acinetobacter baylyi (strain ATCC 33305 / BD413 / ADP1).